Consider the following 120-residue polypeptide: MFLLHEYDIFWAFLIISSIIPILAFLISGVLAPLSEGPEKFSSYESGIEPMGDAWLQFRIRYYMFALVFVVFDVETVFLYPWAMSFDVLGVSVFIEALIFVLIPIVGLVYAWRKGALEWS.

A run of 3 helical transmembrane segments spans residues 9 to 29 (IFWAFLIISSIIPILAFLISG), 64 to 84 (MFALVFVVFDVETVFLYPWAM), and 88 to 108 (VLGVSVFIEALIFVLIPIVGL).

The protein belongs to the complex I subunit 3 family. In terms of assembly, NDH is composed of at least 16 different subunits, 5 of which are encoded in the nucleus.

Its subcellular location is the plastid. It localises to the chloroplast thylakoid membrane. It catalyses the reaction a plastoquinone + NADH + (n+1) H(+)(in) = a plastoquinol + NAD(+) + n H(+)(out). It carries out the reaction a plastoquinone + NADPH + (n+1) H(+)(in) = a plastoquinol + NADP(+) + n H(+)(out). In terms of biological role, NDH shuttles electrons from NAD(P)H:plastoquinone, via FMN and iron-sulfur (Fe-S) centers, to quinones in the photosynthetic chain and possibly in a chloroplast respiratory chain. The immediate electron acceptor for the enzyme in this species is believed to be plastoquinone. Couples the redox reaction to proton translocation, and thus conserves the redox energy in a proton gradient. This Ceratophyllum demersum (Rigid hornwort) protein is NAD(P)H-quinone oxidoreductase subunit 3, chloroplastic.